The sequence spans 322 residues: Putative heme-binding peroxidase (322 aa).

Histidine 38 serves as the catalytic Proton acceptor. Histidine 162 lines the heme b pocket. The active-site Tryptophan radical intermediate is tryptophan 178. The segment at 288–322 (ISAPKKSNHPTGPAKGAQGGCPVAASQGGCPRAKL) is disordered.

Belongs to the peroxidase family. Cytochrome c peroxidase subfamily. Heme b is required as a cofactor.

Its function is as follows. Destroys radicals which are normally produced within the cells and which are toxic to biological systems. This chain is Putative heme-binding peroxidase, found in Aspergillus fumigatus (strain ATCC MYA-4609 / CBS 101355 / FGSC A1100 / Af293) (Neosartorya fumigata).